We begin with the raw amino-acid sequence, 390 residues long: Phosphoglycerate kinase (390 aa).

Substrate contacts are provided by residues 19–21, Arg-34, 57–60, Arg-115, and Arg-148; these read DYN and HLGR. Residues Lys-198, Gly-289, Glu-320, and 347 to 350 each bind ATP; that span reads GGDS.

Belongs to the phosphoglycerate kinase family. In terms of assembly, monomer.

The protein localises to the cytoplasm. The enzyme catalyses (2R)-3-phosphoglycerate + ATP = (2R)-3-phospho-glyceroyl phosphate + ADP. It functions in the pathway carbohydrate degradation; glycolysis; pyruvate from D-glyceraldehyde 3-phosphate: step 2/5. This Thermus thermophilus (strain ATCC 27634 / DSM 579 / HB8) protein is Phosphoglycerate kinase (pgk).